The sequence spans 544 residues: Transcription factor bHLH119 (544 aa).

Disordered regions lie at residues 12 to 59 (NGQV…QPPR) and 185 to 208 (VAST…PPSV). The segment covering 15–29 (VVRTSQPQRPSSGKP) has biased composition (polar residues). Residues 50-59 (LPLPLLQPPR) show a composition bias toward pro residues. Threonine 269 carries the post-translational modification Phosphothreonine. Serine 274 carries the phosphoserine modification. 2 disordered regions span residues 342–364 (QGTE…MHNL) and 522–544 (QPPL…STSK). The region spanning 357 to 406 (RAADMHNLSERRRRERINERMKTLQELLPRCRKTDKVSMLEDVIEYVKSL) is the bHLH domain. The segment covering 522–535 (QPPLPLQGQPTSQP) has biased composition (low complexity). A phosphoserine mark is found at serine 541 and serine 543.

Homodimer.

Its subcellular location is the nucleus. This Arabidopsis thaliana (Mouse-ear cress) protein is Transcription factor bHLH119 (BHLH119).